We begin with the raw amino-acid sequence, 515 residues long: Putative BTB/POZ domain-containing protein At3g49970 (515 aa).

The region spanning 1-63 (MLEKLSFLLH…CYDISFEINT (63 aa)) is the BTB domain. One can recognise an NPH3 domain in the interval 149 to 409 (DWWADDLAVL…NSDSPAPATA (261 aa)). Tyrosine 350 bears the Phosphotyrosine mark. The interval 395-417 (QENLSNSDSPAPATAEKTLSPPE) is disordered. A coiled-coil region spans residues 418-452 (LSSYKNELSKLNRENQYLKLELLKVKMKFKELEKE). Residues 494 to 515 (INPFGLKQGQTKQPKSRRHSIS) are disordered.

The protein belongs to the NPH3 family.

Its pathway is protein modification; protein ubiquitination. Its function is as follows. May act as a substrate-specific adapter of an E3 ubiquitin-protein ligase complex (CUL3-RBX1-BTB) which mediates the ubiquitination and subsequent proteasomal degradation of target proteins. This chain is Putative BTB/POZ domain-containing protein At3g49970, found in Arabidopsis thaliana (Mouse-ear cress).